The following is a 274-amino-acid chain: NH(3)-dependent NAD(+) synthetase (274 aa).

An ATP-binding site is contributed by 46–53 (GISGGQDS). A Mg(2+)-binding site is contributed by aspartate 52. Arginine 140 is a binding site for deamido-NAD(+). ATP is bound at residue threonine 160. Glutamate 165 is a Mg(2+) binding site. Positions 173 and 180 each coordinate deamido-NAD(+). 2 residues coordinate ATP: lysine 189 and threonine 211. Residue 260 to 261 (HK) participates in deamido-NAD(+) binding.

The protein belongs to the NAD synthetase family. In terms of assembly, homodimer.

It carries out the reaction deamido-NAD(+) + NH4(+) + ATP = AMP + diphosphate + NAD(+) + H(+). The protein operates within cofactor biosynthesis; NAD(+) biosynthesis; NAD(+) from deamido-NAD(+) (ammonia route): step 1/1. Functionally, catalyzes the ATP-dependent amidation of deamido-NAD to form NAD. Uses ammonia as a nitrogen source. The polypeptide is NH(3)-dependent NAD(+) synthetase (Lactococcus lactis subsp. cremoris (strain SK11)).